We begin with the raw amino-acid sequence, 426 residues long: Serine--tRNA ligase (426 aa).

231–233 (TAE) serves as a coordination point for L-serine. 262-264 (RSE) is a binding site for ATP. Residue E285 coordinates L-serine. 349–352 (EISS) provides a ligand contact to ATP. Position 385 (S385) interacts with L-serine.

It belongs to the class-II aminoacyl-tRNA synthetase family. Type-1 seryl-tRNA synthetase subfamily. In terms of assembly, homodimer. The tRNA molecule binds across the dimer.

The protein resides in the cytoplasm. The enzyme catalyses tRNA(Ser) + L-serine + ATP = L-seryl-tRNA(Ser) + AMP + diphosphate + H(+). It carries out the reaction tRNA(Sec) + L-serine + ATP = L-seryl-tRNA(Sec) + AMP + diphosphate + H(+). The protein operates within aminoacyl-tRNA biosynthesis; selenocysteinyl-tRNA(Sec) biosynthesis; L-seryl-tRNA(Sec) from L-serine and tRNA(Sec): step 1/1. Its function is as follows. Catalyzes the attachment of serine to tRNA(Ser). Is also able to aminoacylate tRNA(Sec) with serine, to form the misacylated tRNA L-seryl-tRNA(Sec), which will be further converted into selenocysteinyl-tRNA(Sec). This Saccharophagus degradans (strain 2-40 / ATCC 43961 / DSM 17024) protein is Serine--tRNA ligase.